The primary structure comprises 249 residues: 2,3-bisphosphoglycerate-dependent phosphoglycerate mutase (249 aa).

Residues 8–15, 21–22, Arg60, 87–90, Lys98, 114–115, and 183–184 contribute to the substrate site; these read RHGESTWN, TG, ERHY, RR, and GN. His9 functions as the Tele-phosphohistidine intermediate in the catalytic mechanism. Glu87 (proton donor/acceptor) is an active-site residue.

The protein belongs to the phosphoglycerate mutase family. BPG-dependent PGAM subfamily. In terms of assembly, homodimer.

It catalyses the reaction (2R)-2-phosphoglycerate = (2R)-3-phosphoglycerate. It participates in carbohydrate degradation; glycolysis; pyruvate from D-glyceraldehyde 3-phosphate: step 3/5. Its function is as follows. Catalyzes the interconversion of 2-phosphoglycerate and 3-phosphoglycerate. This is 2,3-bisphosphoglycerate-dependent phosphoglycerate mutase from Burkholderia mallei (strain NCTC 10247).